The following is an 859-amino-acid chain: MEKEYSPKKIENYVQEFWKKNKTFEVKEDPKKEKYYCLPMLPYPSGKLHMGHVRNYTISDVISRYQRMLGKNVLQPMGWDAFGLPAEEAAIRNNTDPFSWTQKNIKYMKKQLQSLGFSYDWSREITTCHPEYYHWEQWFFTKLYEKKLVYKKNSLVNWCSYDKTVLANEQVIDGCCWRCQNKIRIKQIPQWFIKIRNYAESLYQDLKKLTHWPENVKNMQRNWIGRIKGFEITLNVFNTCQKLKVFTQRLDLLMGVTYISISSCHKLSINLSKKNELIKKFIKKYRYISQEEQYKVKYTGINTNLFVVHPITKKTIPIWISNATHIEYGTNAVLSIPGHNENDWNFAVKNNLKIKYVIFNPDHQEPKLYTSFLDIKGTLFNSQEFNGLNLKDGTEKIKKILYKKKILKEKINYKLQDWCISRQRYWGTPIPMAKFKNGKMIPIPENQLPVVLPKIRKNTNLLQQAINFNSKWAEIFIHGKHAIREIDTFDTFMESSWYYARYTCPNFNTGMIDSIASKYWLPVDQYIGGIEHAIMHLMYFRFYHKLLRDFKLVDFDEPVKNLLCQGMVLSEAFYKIDSNSQRKWFNSSSVLIKRNTKGEIIESHTQKGEKLIYAGMIKMSKSKNNGIEPELIIQRYGADTIRLFIMFSAPVESDLEWKESGLKGIYRFLKKLWMLIFNYIDIKNTHKKINFDFLNHQQSELRYQLHKTIAKVSDDIGRRQTFNTAISEIMKLVNQLSKAPIKEEQDKSIMRESLICIIKMLYPFTPHFCFFVWNYFNNHSSIDNEKWPIFQKDILSKKYSTIVAQINGKKRCATKISDSLTKEEIFLYIQNQPIIKKYLEDVDIKKIIYIPKKIINFVT.

Positions 42 to 52 (PYPSGKLHMGH) match the 'HIGH' region motif. A 'KMSKS' region motif is present at residues 618–622 (KMSKS). ATP is bound at residue Lys621.

Belongs to the class-I aminoacyl-tRNA synthetase family.

The protein resides in the cytoplasm. It catalyses the reaction tRNA(Leu) + L-leucine + ATP = L-leucyl-tRNA(Leu) + AMP + diphosphate. The protein is Leucine--tRNA ligase of Buchnera aphidicola subsp. Acyrthosiphon pisum (strain APS) (Acyrthosiphon pisum symbiotic bacterium).